A 224-amino-acid polypeptide reads, in one-letter code: MTQDQLKQAVAQAAVDFILPKLDEKSVVGVGTGSTANFFIDALAQHKTAFDGAVASSEATAQRLKGHGIPVYELNSVSELEFYVDGADESDAHLNLIKGGGAALTREKIVAAVAKTFICIADASKLVPVLGAFPLPVEVIPMARSHVARQLVKLGGDPVYREGVVTDNGNVILDVYNLQITNPVELEAQINAIVGVVTNGLFAARPADLLLLGTPEGVKSLKAE.

Residues 32–35, 85–88, and 98–101 contribute to the substrate site; these read TGST, DGAD, and KGGG. The Proton acceptor role is filled by Glu-107. Residue Lys-125 participates in substrate binding.

The protein belongs to the ribose 5-phosphate isomerase family. In terms of assembly, homodimer.

It catalyses the reaction aldehydo-D-ribose 5-phosphate = D-ribulose 5-phosphate. Its pathway is carbohydrate degradation; pentose phosphate pathway; D-ribose 5-phosphate from D-ribulose 5-phosphate (non-oxidative stage): step 1/1. Catalyzes the reversible conversion of ribose-5-phosphate to ribulose 5-phosphate. The protein is Ribose-5-phosphate isomerase A of Pseudomonas putida (strain W619).